Here is a 122-residue protein sequence, read N- to C-terminus: Chorismate mutase AroH (122 aa).

A Chorismate mutase aroH-type domain is found at 2–120; it reads VRGIRGAITV…AVRLRPDLES (119 aa). Residues Arg6, Arg89, and Tyr107 each coordinate prephenate.

As to quaternary structure, homotrimer.

Its subcellular location is the cytoplasm. It catalyses the reaction chorismate = prephenate. It participates in metabolic intermediate biosynthesis; prephenate biosynthesis; prephenate from chorismate: step 1/1. Inhibited by 40% with 500 uM tyrosine, and a tyrosine concentration as high as 5 mM reduced activity to 5%. In terms of biological role, catalyzes the Claisen rearrangement of chorismate to prephenate. Probably involved in the aromatic amino acid biosynthesis. The sequence is that of Chorismate mutase AroH from Thermus thermophilus.